The primary structure comprises 891 residues: DNA mismatch repair protein MutS (891 aa).

An ATP-binding site is contributed by Gly-632 to Ser-639.

It belongs to the DNA mismatch repair MutS family.

In terms of biological role, this protein is involved in the repair of mismatches in DNA. It is possible that it carries out the mismatch recognition step. This protein has a weak ATPase activity. This Rhodopirellula baltica (strain DSM 10527 / NCIMB 13988 / SH1) protein is DNA mismatch repair protein MutS.